The sequence spans 223 residues: MKTAIIQLPGLNRDRDMVAALHHITGVEPLKIWQTESTIPDVDVIVIPGGFSYGDYLRCGAIGARTPVLQAVREKAQKGVTVIGICNGFQILLEAGLLPGTLMRNTSLKFVCREIKLEVVNVNTKFSRYYSKGQIICCPVAHHDGNYFVDSETLKQMEENEQIIFRYAENTNPNGSVNDIAGIINKAGNILGMMPHPENFIEPAHGGTDGRLFFQSALELAKG.

Positions Lys-2–Gly-223 constitute a Glutamine amidotransferase type-1 domain. Cys-86 (nucleophile) is an active-site residue. Residues His-196 and Glu-198 contribute to the active site.

In terms of assembly, part of the FGAM synthase complex composed of 1 PurL, 1 PurQ and 2 PurS subunits.

The protein localises to the cytoplasm. The enzyme catalyses N(2)-formyl-N(1)-(5-phospho-beta-D-ribosyl)glycinamide + L-glutamine + ATP + H2O = 2-formamido-N(1)-(5-O-phospho-beta-D-ribosyl)acetamidine + L-glutamate + ADP + phosphate + H(+). The catalysed reaction is L-glutamine + H2O = L-glutamate + NH4(+). The protein operates within purine metabolism; IMP biosynthesis via de novo pathway; 5-amino-1-(5-phospho-D-ribosyl)imidazole from N(2)-formyl-N(1)-(5-phospho-D-ribosyl)glycinamide: step 1/2. In terms of biological role, part of the phosphoribosylformylglycinamidine synthase complex involved in the purines biosynthetic pathway. Catalyzes the ATP-dependent conversion of formylglycinamide ribonucleotide (FGAR) and glutamine to yield formylglycinamidine ribonucleotide (FGAM) and glutamate. The FGAM synthase complex is composed of three subunits. PurQ produces an ammonia molecule by converting glutamine to glutamate. PurL transfers the ammonia molecule to FGAR to form FGAM in an ATP-dependent manner. PurS interacts with PurQ and PurL and is thought to assist in the transfer of the ammonia molecule from PurQ to PurL. This chain is Phosphoribosylformylglycinamidine synthase subunit PurQ, found in Bartonella henselae (strain ATCC 49882 / DSM 28221 / CCUG 30454 / Houston 1) (Rochalimaea henselae).